A 294-amino-acid polypeptide reads, in one-letter code: Pyridoxal 5'-phosphate synthase subunit PdxS (294 aa).

Residue Asp24 coordinates D-ribose 5-phosphate. Lys81 (schiff-base intermediate with D-ribose 5-phosphate) is an active-site residue. Gly153 contributes to the D-ribose 5-phosphate binding site. Arg165 lines the D-glyceraldehyde 3-phosphate pocket. D-ribose 5-phosphate is bound by residues Gly214 and 235–236 (GS).

Belongs to the PdxS/SNZ family. In terms of assembly, in the presence of PdxT, forms a dodecamer of heterodimers.

The catalysed reaction is aldehydo-D-ribose 5-phosphate + D-glyceraldehyde 3-phosphate + L-glutamine = pyridoxal 5'-phosphate + L-glutamate + phosphate + 3 H2O + H(+). The protein operates within cofactor biosynthesis; pyridoxal 5'-phosphate biosynthesis. In terms of biological role, catalyzes the formation of pyridoxal 5'-phosphate from ribose 5-phosphate (RBP), glyceraldehyde 3-phosphate (G3P) and ammonia. The ammonia is provided by the PdxT subunit. Can also use ribulose 5-phosphate and dihydroxyacetone phosphate as substrates, resulting from enzyme-catalyzed isomerization of RBP and G3P, respectively. The chain is Pyridoxal 5'-phosphate synthase subunit PdxS from Geobacillus thermodenitrificans (strain NG80-2).